The chain runs to 109 residues: Nucleoid-associated protein HI_0442 (109 aa).

It belongs to the YbaB/EbfC family. In terms of assembly, homodimer.

The protein resides in the cytoplasm. Its subcellular location is the nucleoid. Functionally, binds to DNA and alters its conformation. May be involved in regulation of gene expression, nucleoid organization and DNA protection. The polypeptide is Nucleoid-associated protein HI_0442 (Haemophilus influenzae (strain ATCC 51907 / DSM 11121 / KW20 / Rd)).